Reading from the N-terminus, the 237-residue chain is Probable F-box protein At1g53815 (237 aa).

The region spanning 41–72 (ISNILSRLPLKSKAKCRCVSKLWSSIIRRPNY) is the F-box domain.

This Arabidopsis thaliana (Mouse-ear cress) protein is Probable F-box protein At1g53815.